Here is a 214-residue protein sequence, read N- to C-terminus: Small ribosomal subunit protein uS3c (214 aa).

Positions 39–111 constitute a KH type-2 domain; it reads IRTYLNKLAK…QLTINIIEVE (73 aa).

The protein belongs to the universal ribosomal protein uS3 family. In terms of assembly, part of the 30S ribosomal subunit.

The protein resides in the plastid. It is found in the chloroplast. This is Small ribosomal subunit protein uS3c (rps3) from Trieres chinensis (Marine centric diatom).